We begin with the raw amino-acid sequence, 161 residues long: Large ribosomal subunit protein bL21m (161 aa).

The N-terminal 35 residues, 1–35 (MLQLKFIWPVARITPIYRPFTSHPFRNLATSSSIS), are a transit peptide targeting the mitochondrion.

This sequence belongs to the bacterial ribosomal protein bL21 family. Component of the mitochondrial large ribosomal subunit (mt-LSU). Mature yeast 74S mitochondrial ribosomes consist of a small (37S) and a large (54S) subunit. The 37S small subunit contains a 15S ribosomal RNA (15S mt-rRNA) and 34 different proteins. The 54S large subunit contains a 21S rRNA (21S mt-rRNA) and 46 different proteins.

It is found in the mitochondrion. Functionally, component of the mitochondrial ribosome (mitoribosome), a dedicated translation machinery responsible for the synthesis of mitochondrial genome-encoded proteins, including at least some of the essential transmembrane subunits of the mitochondrial respiratory chain. The mitoribosomes are attached to the mitochondrial inner membrane and translation products are cotranslationally integrated into the membrane. The polypeptide is Large ribosomal subunit protein bL21m (MRPL49) (Saccharomyces cerevisiae (strain ATCC 204508 / S288c) (Baker's yeast)).